The primary structure comprises 340 residues: Phenylalanine--tRNA ligase alpha subunit (340 aa).

Glu255 is a Mg(2+) binding site.

Belongs to the class-II aminoacyl-tRNA synthetase family. Phe-tRNA synthetase alpha subunit type 1 subfamily. As to quaternary structure, tetramer of two alpha and two beta subunits. It depends on Mg(2+) as a cofactor.

It localises to the cytoplasm. The catalysed reaction is tRNA(Phe) + L-phenylalanine + ATP = L-phenylalanyl-tRNA(Phe) + AMP + diphosphate + H(+). This Syntrophomonas wolfei subsp. wolfei (strain DSM 2245B / Goettingen) protein is Phenylalanine--tRNA ligase alpha subunit.